Here is an 85-residue protein sequence, read N- to C-terminus: Small ribosomal subunit protein uS17 (85 aa).

It belongs to the universal ribosomal protein uS17 family. In terms of assembly, part of the 30S ribosomal subunit.

In terms of biological role, one of the primary rRNA binding proteins, it binds specifically to the 5'-end of 16S ribosomal RNA. The polypeptide is Small ribosomal subunit protein uS17 (Geobacter metallireducens (strain ATCC 53774 / DSM 7210 / GS-15)).